Reading from the N-terminus, the 97-residue chain is Co-chaperonin GroES (97 aa).

This sequence belongs to the GroES chaperonin family. As to quaternary structure, heptamer of 7 subunits arranged in a ring. Interacts with the chaperonin GroEL.

Its subcellular location is the cytoplasm. In terms of biological role, together with the chaperonin GroEL, plays an essential role in assisting protein folding. The GroEL-GroES system forms a nano-cage that allows encapsulation of the non-native substrate proteins and provides a physical environment optimized to promote and accelerate protein folding. GroES binds to the apical surface of the GroEL ring, thereby capping the opening of the GroEL channel. This chain is Co-chaperonin GroES, found in Blochmanniella pennsylvanica (strain BPEN).